Reading from the N-terminus, the 114-residue chain is DNA-directed RNA polymerase subunit omega (114 aa).

The protein belongs to the RNA polymerase subunit omega family. As to quaternary structure, the RNAP catalytic core consists of 2 alpha, 1 beta, 1 beta' and 1 omega subunit. When a sigma factor is associated with the core the holoenzyme is formed, which can initiate transcription.

It catalyses the reaction RNA(n) + a ribonucleoside 5'-triphosphate = RNA(n+1) + diphosphate. Its function is as follows. Promotes RNA polymerase assembly. Latches the N- and C-terminal regions of the beta' subunit thereby facilitating its interaction with the beta and alpha subunits. This Novosphingobium aromaticivorans (strain ATCC 700278 / DSM 12444 / CCUG 56034 / CIP 105152 / NBRC 16084 / F199) protein is DNA-directed RNA polymerase subunit omega.